Consider the following 137-residue polypeptide: Nucleoside diphosphate kinase (137 aa).

Positions 9, 57, 85, 91, 102, and 112 each coordinate ATP. Catalysis depends on histidine 115, which acts as the Pros-phosphohistidine intermediate.

This sequence belongs to the NDK family. Homotetramer. It depends on Mg(2+) as a cofactor.

It is found in the cytoplasm. It catalyses the reaction a 2'-deoxyribonucleoside 5'-diphosphate + ATP = a 2'-deoxyribonucleoside 5'-triphosphate + ADP. It carries out the reaction a ribonucleoside 5'-diphosphate + ATP = a ribonucleoside 5'-triphosphate + ADP. Its function is as follows. Major role in the synthesis of nucleoside triphosphates other than ATP. The ATP gamma phosphate is transferred to the NDP beta phosphate via a ping-pong mechanism, using a phosphorylated active-site intermediate. The chain is Nucleoside diphosphate kinase from Thermus thermophilus (strain ATCC BAA-163 / DSM 7039 / HB27).